The following is a 173-amino-acid chain: Shikimate kinase 1 (173 aa).

14–19 (GAGKST) lines the ATP pocket. S18 contributes to the Mg(2+) binding site. The substrate site is built by D36, R60, and G82. R120 lines the ATP pocket. R140 serves as a coordination point for substrate. Q157 is an ATP binding site.

Belongs to the shikimate kinase family. As to quaternary structure, monomer. It depends on Mg(2+) as a cofactor.

It localises to the cytoplasm. It catalyses the reaction shikimate + ATP = 3-phosphoshikimate + ADP + H(+). It functions in the pathway metabolic intermediate biosynthesis; chorismate biosynthesis; chorismate from D-erythrose 4-phosphate and phosphoenolpyruvate: step 5/7. Catalyzes the specific phosphorylation of the 3-hydroxyl group of shikimic acid using ATP as a cosubstrate. This chain is Shikimate kinase 1, found in Escherichia fergusonii (strain ATCC 35469 / DSM 13698 / CCUG 18766 / IAM 14443 / JCM 21226 / LMG 7866 / NBRC 102419 / NCTC 12128 / CDC 0568-73).